Here is a 205-residue protein sequence, read N- to C-terminus: Urease accessory protein UreG (205 aa).

14–21 (GPVGSGKT) lines the GTP pocket.

In terms of assembly, homodimer. UreD, UreF and UreG form a complex that acts as a GTP-hydrolysis-dependent molecular chaperone, activating the urease apoprotein by helping to assemble the nickel containing metallocenter of UreC. The UreE protein probably delivers the nickel.

The protein localises to the cytoplasm. Its activity is regulated as follows. Activation of apourease within the UreDFG-apoprotein complex is inhibited by zinc, copper and cobalt. Functionally, facilitates the functional incorporation of the urease nickel metallocenter. This process requires GTP hydrolysis, probably effectuated by UreG. This is Urease accessory protein UreG from Klebsiella aerogenes (Enterobacter aerogenes).